The primary structure comprises 452 residues: Cholesterol 7-desaturase nvd 2 (452 aa).

2 consecutive transmembrane segments (helical) span residues 6-26 and 32-52; these read LIRI…MGLC and FPVM…ALVM. The 106-residue stretch at 107–212 folds into the Rieske domain; that stretch reads WFKVADSTWI…CCEVDGMAYL (106 aa). Residues cysteine 148, histidine 150, cysteine 169, and histidine 172 each contribute to the [2Fe-2S] cluster site.

Belongs to the cholesterol 7-desaturase family. Requires [2Fe-2S] cluster as cofactor.

The protein resides in the membrane. It carries out the reaction cholesterol + NADPH + O2 + H(+) = 7-dehydrocholesterol + NADP(+) + 2 H2O. The enzyme catalyses cholesterol + NADH + O2 + H(+) = 7-dehydrocholesterol + NAD(+) + 2 H2O. The protein operates within steroid hormone biosynthesis; dafachronic acid biosynthesis. Its function is as follows. Catalyzes the production of 7-dehydrocholesterol (7-DHC or cholesta-5,7-dien-3beta-ol) by inserting a double bond (desaturating) at the C7-C8 single bond of cholesterol. Essential regulator of steroid biosynthesis as this reaction is the first step in the synthesis of the steroid hormone Delta(7)-dafachronic acid. The polypeptide is Cholesterol 7-desaturase nvd 2 (Ciona intestinalis (Transparent sea squirt)).